Reading from the N-terminus, the 223-residue chain is Phosphoribosylformylglycinamidine synthase subunit PurQ (223 aa).

Residues 3 to 223 enclose the Glutamine amidotransferase type-1 domain; sequence FAVLVFPGSN…MVNSWREQNV (221 aa). Residue Cys-85 is the Nucleophile of the active site. Catalysis depends on residues His-193 and Glu-195.

As to quaternary structure, part of the FGAM synthase complex composed of 1 PurL, 1 PurQ and 2 PurS subunits.

It localises to the cytoplasm. The enzyme catalyses N(2)-formyl-N(1)-(5-phospho-beta-D-ribosyl)glycinamide + L-glutamine + ATP + H2O = 2-formamido-N(1)-(5-O-phospho-beta-D-ribosyl)acetamidine + L-glutamate + ADP + phosphate + H(+). It carries out the reaction L-glutamine + H2O = L-glutamate + NH4(+). The protein operates within purine metabolism; IMP biosynthesis via de novo pathway; 5-amino-1-(5-phospho-D-ribosyl)imidazole from N(2)-formyl-N(1)-(5-phospho-D-ribosyl)glycinamide: step 1/2. Its function is as follows. Part of the phosphoribosylformylglycinamidine synthase complex involved in the purines biosynthetic pathway. Catalyzes the ATP-dependent conversion of formylglycinamide ribonucleotide (FGAR) and glutamine to yield formylglycinamidine ribonucleotide (FGAM) and glutamate. The FGAM synthase complex is composed of three subunits. PurQ produces an ammonia molecule by converting glutamine to glutamate. PurL transfers the ammonia molecule to FGAR to form FGAM in an ATP-dependent manner. PurS interacts with PurQ and PurL and is thought to assist in the transfer of the ammonia molecule from PurQ to PurL. In Staphylococcus haemolyticus (strain JCSC1435), this protein is Phosphoribosylformylglycinamidine synthase subunit PurQ.